A 251-amino-acid polypeptide reads, in one-letter code: Transcriptional cofactor Bfc (251 aa).

In terms of assembly, interacts with srp (via GATA-type Zn-finger domain); this interaction enhances srp binding to the promoter of crq/croquemort.

The protein localises to the nucleus. Its function is as follows. Transcriptional cofactor involved in efferocytosis. Together with srp mediates expression of the phagocytic receptor crq/croquemort in response to apoptotic cells, and is up-regulated by crq/croquemort in a positive feedback mechanism. Involved in macrophage engulfment and clearance of apoptotic cells during embryogenesis. In Drosophila melanogaster (Fruit fly), this protein is Transcriptional cofactor Bfc.